Reading from the N-terminus, the 328-residue chain is Arylacetonitrilase (328 aa).

Residues 5 to 278 (VRVAVTQAEP…EGIIYADLDL (274 aa)) form the CN hydrolase domain. The active-site Proton acceptor is glutamate 45. Lysine 125 is a catalytic residue. Cysteine 160 serves as the catalytic Nucleophile.

It belongs to the carbon-nitrogen hydrolase superfamily. Nitrilase family.

The catalysed reaction is a nitrile + 2 H2O = a carboxylate + NH4(+). It catalyses the reaction 4-chlorophenylacetonitrile + 2 H2O = 4-chlorophenylacetate + NH4(+). Functionally, nitrilase that hydrolyzes preferentially phenylacetonitrile and (R,S)-mandelonitrile. Also acts on dinitriles like phenylenediacetonitriles (PDAs) 1,2-PDA, 1,3-PDA, and 1,4-PDA, and cyanophenyl acetonitriles (CPAs) 2-CPA and 4-CPA. The protein is Arylacetonitrilase (nit2) of Aspergillus kawachii (strain NBRC 4308) (White koji mold).